The following is an 88-amino-acid chain: Small ribosomal subunit protein uS15 (88 aa).

The protein belongs to the universal ribosomal protein uS15 family. Part of the 30S ribosomal subunit. Forms a bridge to the 50S subunit in the 70S ribosome, contacting the 23S rRNA.

Its function is as follows. One of the primary rRNA binding proteins, it binds directly to 16S rRNA where it helps nucleate assembly of the platform of the 30S subunit by binding and bridging several RNA helices of the 16S rRNA. Forms an intersubunit bridge (bridge B4) with the 23S rRNA of the 50S subunit in the ribosome. The sequence is that of Small ribosomal subunit protein uS15 from Desulfitobacterium hafniense (strain Y51).